Here is a 463-residue protein sequence, read N- to C-terminus: Glycine--tRNA ligase (463 aa).

Substrate is bound by residues arginine 98 and glutamate 174. ATP is bound by residues 206–208 (RNE), 216–221 (FRTREF), 290–291 (EL), and 334–337 (GADR). A substrate-binding site is contributed by 221 to 225 (FEQME). 330-334 (EPSLG) is a substrate binding site.

This sequence belongs to the class-II aminoacyl-tRNA synthetase family. In terms of assembly, homodimer.

The protein localises to the cytoplasm. The catalysed reaction is tRNA(Gly) + glycine + ATP = glycyl-tRNA(Gly) + AMP + diphosphate. In terms of biological role, catalyzes the attachment of glycine to tRNA(Gly). The protein is Glycine--tRNA ligase of Staphylococcus aureus (strain Mu50 / ATCC 700699).